A 339-amino-acid chain; its full sequence is Phosphate acyltransferase (339 aa).

This sequence belongs to the PlsX family. In terms of assembly, homodimer. Probably interacts with PlsY.

It is found in the cytoplasm. It carries out the reaction a fatty acyl-[ACP] + phosphate = an acyl phosphate + holo-[ACP]. It functions in the pathway lipid metabolism; phospholipid metabolism. Functionally, catalyzes the reversible formation of acyl-phosphate (acyl-PO(4)) from acyl-[acyl-carrier-protein] (acyl-ACP). This enzyme utilizes acyl-ACP as fatty acyl donor, but not acyl-CoA. In Pasteurella multocida (strain Pm70), this protein is Phosphate acyltransferase.